Here is a 481-residue protein sequence, read N- to C-terminus: MKVLSEGQLKLCVVQPVHLTSWLLIFFILKSISCLKPARLPIYQRKPFIAAWNAPTDQCLIKYNLRLNLKMFPVIGSPLAKARGQNVTIFYVNRLGYYPWYTSQGVPINGGLPQNISLQVHLEKADQDINYYIPAEDFSGLAVIDWEYWRPQWARNWNSKDVYRQKSRKLISDMGKNVSATDIEYLAKVTFEESAKAFMKETIKLGIKSRPKGLWGYYLYPDCHNYNVYAPNYSGSCPEDEVLRNNELSWLWNSSAALYPSIGVWKSLGDSENILRFSKFRVHESMRISTMTSHDYALPVFVYTRLGYRDEPLFFLSKQDLVSTIGESAALGAAGIVIWGDMNLTASKANCTKVKQFVSSDLGSYIANVTRAAEVCSLHLCRNNGRCIRKMWNAPSYLHLNPASYHIEASEDGEFTVKGKASDTDLAVMADTFSCHCYQGYEGADCREIKTADGCSGVSPSPGSLMTLCLLLLASYRSIQL.

At 1 to 8 the chain is on the cytoplasmic side; the sequence is MKVLSEGQ. Residues 9 to 29 form a helical membrane-spanning segment; the sequence is LKLCVVQPVHLTSWLLIFFIL. Over 30 to 453 the chain is Extracellular; sequence KSISCLKPAR…ADCREIKTAD (424 aa). 5 disulfides stabilise this stretch: cysteine 59–cysteine 351, cysteine 223–cysteine 237, cysteine 376–cysteine 387, cysteine 381–cysteine 435, and cysteine 437–cysteine 446. N-linked (GlcNAc...) asparagine glycosylation is found at asparagine 86 and asparagine 115. The Proton donor role is filled by glutamate 147. Asparagine 177 carries N-linked (GlcNAc...) (complex) asparagine glycosylation. A glycan (N-linked (GlcNAc...) asparagine) is linked at asparagine 343. The chain crosses the membrane as a helical span at residues 454–474; that stretch reads GCSGVSPSPGSLMTLCLLLLA. The Cytoplasmic segment spans residues 475-481; it reads SYRSIQL.

This sequence belongs to the glycosyl hydrolase 56 family. As to expression, detected in placenta and skeletal muscle.

It localises to the membrane. It carries out the reaction Random hydrolysis of (1-&gt;4)-linkages between N-acetyl-beta-D-glucosamine and D-glucuronate residues in hyaluronate.. Functionally, endo-hyaluronidase that degrades hyaluronan to smaller oligosaccharide fragments. Also has chondroitin sulfate hydrolase activity, The best substrate being the galactosaminidic linkage in the sequence of a trisulfated tetrasaccharide. The protein is Hyaluronidase-4 (HYAL4) of Homo sapiens (Human).